We begin with the raw amino-acid sequence, 86 residues long: Small ribosomal subunit protein uS17 (86 aa).

Belongs to the universal ribosomal protein uS17 family. As to quaternary structure, part of the 30S ribosomal subunit.

Functionally, one of the primary rRNA binding proteins, it binds specifically to the 5'-end of 16S ribosomal RNA. The polypeptide is Small ribosomal subunit protein uS17 (Roseiflexus sp. (strain RS-1)).